The primary structure comprises 167 residues: MRLKKLPIRRKMPMELAYIEKLFREEVGLDIKEHKDKAEQISETVVEIYEELLRKGIENANYNGRDYVSYYDLPITEDLERYMNRFIQDRGEEVLKAFVDYLAKLEEELLKAEEALPPLDEELHQKKADILGGIMLMFASVAKQINGDRKLYAESIPVTREVLRTMI.

It to A.aeolicus aq_328.

This is an uncharacterized protein from Aquifex aeolicus (strain VF5).